The primary structure comprises 520 residues: 2-isopropylmalate synthase (520 aa).

The Pyruvate carboxyltransferase domain maps to 12–274; sequence IRIFDTTLRD…DSAINTPRIV (263 aa). Mn(2+) contacts are provided by aspartate 21, histidine 209, histidine 211, and asparagine 245. The regulatory domain stretch occupies residues 396–520; the sequence is RLASMTISDV…VVAGKTAAVA (125 aa).

The protein belongs to the alpha-IPM synthase/homocitrate synthase family. LeuA type 1 subfamily. Homodimer. Mn(2+) serves as cofactor.

The protein resides in the cytoplasm. It carries out the reaction 3-methyl-2-oxobutanoate + acetyl-CoA + H2O = (2S)-2-isopropylmalate + CoA + H(+). The protein operates within amino-acid biosynthesis; L-leucine biosynthesis; L-leucine from 3-methyl-2-oxobutanoate: step 1/4. Functionally, catalyzes the condensation of the acetyl group of acetyl-CoA with 3-methyl-2-oxobutanoate (2-ketoisovalerate) to form 3-carboxy-3-hydroxy-4-methylpentanoate (2-isopropylmalate). The protein is 2-isopropylmalate synthase of Xanthomonas axonopodis pv. citri (strain 306).